Reading from the N-terminus, the 142-residue chain is Hemoglobin subunit alpha-C (142 aa).

Residue Ala-2 is modified to N-acetylalanine. A Globin domain is found at 2 to 142 (ALNCDDKAHI…VSGLLTSKYR (141 aa)). His-59 is an O2 binding site. His-88 lines the heme b pocket.

It belongs to the globin family. As to quaternary structure, heterotetramer of either two alpha-B chains or two alpha-C chains and two beta chains. The two major hemoglobins, B and C, associate upon deoxygenation to form a trimer of tetramers, BC2, that has a much lower affinity for oxygen than either component alone. As to expression, red blood cells.

Functionally, the alpha-C chain is a component of adult hemoglobin C. In Aquarana catesbeiana (American bullfrog), this protein is Hemoglobin subunit alpha-C.